Reading from the N-terminus, the 656-residue chain is Chaperone protein HtpG (656 aa).

Residues 1-364 form an a; substrate-binding region; the sequence is MSEQNPTDSK…SADLPLNVSR (364 aa). Residues 365 to 583 are b; it reads EILQESRDVK…EGELSPQMIQ (219 aa). A c region spans residues 584-656; it reads MLKQMGQDVP…LRRVNELLMK (73 aa).

Belongs to the heat shock protein 90 family. In terms of assembly, homodimer.

It is found in the cytoplasm. In terms of biological role, molecular chaperone. Has ATPase activity. In Psychrobacter arcticus (strain DSM 17307 / VKM B-2377 / 273-4), this protein is Chaperone protein HtpG.